The chain runs to 142 residues: MKTFTAKPETVKRDWFVVDAAGQTLGRLATEIASRLRGKHKPEYTPHVDTGDYIVVINAEQIRVTGAKTTDKMYYSHSGFPGGIKSINFEKLIAKAPERVIETAVKGMLPKNPLGRDMYRKLKVYAGAAHPHTAQQPQELKI.

Belongs to the universal ribosomal protein uL13 family. In terms of assembly, part of the 50S ribosomal subunit.

This protein is one of the early assembly proteins of the 50S ribosomal subunit, although it is not seen to bind rRNA by itself. It is important during the early stages of 50S assembly. The polypeptide is Large ribosomal subunit protein uL13 (Pseudomonas fluorescens (strain Pf0-1)).